The chain runs to 178 residues: DNA-directed RNA polymerase V subunit 7 (178 aa).

The protein belongs to the eukaryotic RPB7/RPC8 RNA polymerase subunit family. In terms of assembly, component of the RNA polymerase V complex.

Its subcellular location is the nucleus. Its function is as follows. DNA-dependent RNA polymerase catalyzes the transcription of DNA into RNA using the four ribonucleoside triphosphates as substrates. Component of RNA polymerase V involved in RNA-directed DNA methylation-dependent (RdDM) silencing of endogenous repeated sequences, including transposable elements. The chain is DNA-directed RNA polymerase V subunit 7 (NRPE7) from Arabidopsis thaliana (Mouse-ear cress).